The following is a 257-amino-acid chain: Phosphonates import ATP-binding protein PhnC (257 aa).

In terms of domain architecture, ABC transporter spans 4 to 248 (IEFKDVRKVY…AFNEIYGRSI (245 aa)). Residue 37–44 (GLSGSGKS) coordinates ATP.

The protein belongs to the ABC transporter superfamily. Phosphonates importer (TC 3.A.1.9.1) family. As to quaternary structure, the complex is composed of two ATP-binding proteins (PhnC), two transmembrane proteins (PhnE) and a solute-binding protein (PhnD).

It localises to the cell membrane. The enzyme catalyses phosphonate(out) + ATP + H2O = phosphonate(in) + ADP + phosphate + H(+). Functionally, part of the ABC transporter complex PhnCDE involved in phosphonates import. Responsible for energy coupling to the transport system. This is Phosphonates import ATP-binding protein PhnC from Staphylococcus saprophyticus subsp. saprophyticus (strain ATCC 15305 / DSM 20229 / NCIMB 8711 / NCTC 7292 / S-41).